We begin with the raw amino-acid sequence, 250 residues long: 3-deoxy-manno-octulosonate cytidylyltransferase (250 aa).

This sequence belongs to the KdsB family.

It localises to the cytoplasm. It catalyses the reaction 3-deoxy-alpha-D-manno-oct-2-ulosonate + CTP = CMP-3-deoxy-beta-D-manno-octulosonate + diphosphate. It functions in the pathway nucleotide-sugar biosynthesis; CMP-3-deoxy-D-manno-octulosonate biosynthesis; CMP-3-deoxy-D-manno-octulosonate from 3-deoxy-D-manno-octulosonate and CTP: step 1/1. It participates in bacterial outer membrane biogenesis; lipopolysaccharide biosynthesis. In terms of biological role, activates KDO (a required 8-carbon sugar) for incorporation into bacterial lipopolysaccharide in Gram-negative bacteria. This is 3-deoxy-manno-octulosonate cytidylyltransferase from Legionella pneumophila (strain Lens).